We begin with the raw amino-acid sequence, 200 residues long: Small ribosomal subunit protein uS4c (200 aa).

An S4 RNA-binding domain is found at 91-154 (MRLDNVVFRL…NSRKMVTEAN (64 aa)).

This sequence belongs to the universal ribosomal protein uS4 family. As to quaternary structure, part of the 30S ribosomal subunit. Contacts protein S5. The interaction surface between S4 and S5 is involved in control of translational fidelity.

Its subcellular location is the plastid. It is found in the chloroplast. Functionally, one of the primary rRNA binding proteins, it binds directly to 16S rRNA where it nucleates assembly of the body of the 30S subunit. Its function is as follows. With S5 and S12 plays an important role in translational accuracy. The polypeptide is Small ribosomal subunit protein uS4c (rps4) (Oltmannsiellopsis viridis (Marine flagellate)).